Consider the following 336-residue polypeptide: DNA-directed RNA polymerase subunit alpha (336 aa).

The interval 1 to 238 is alpha N-terminal domain (alpha-NTD); it reads MNDLDLNLVP…NLFLPFLQAE (238 aa). Positions 267–336 are alpha C-terminal domain (alpha-CTD); sequence AKKVTFQHIF…LQKRFGMRLQ (70 aa).

The protein belongs to the RNA polymerase alpha chain family. In terms of assembly, in plastids the minimal PEP RNA polymerase catalytic core is composed of four subunits: alpha, beta, beta', and beta''. When a (nuclear-encoded) sigma factor is associated with the core the holoenzyme is formed, which can initiate transcription.

Its subcellular location is the plastid. It localises to the chloroplast. The catalysed reaction is RNA(n) + a ribonucleoside 5'-triphosphate = RNA(n+1) + diphosphate. Its function is as follows. DNA-dependent RNA polymerase catalyzes the transcription of DNA into RNA using the four ribonucleoside triphosphates as substrates. This Huperzia lucidula (Shining clubmoss) protein is DNA-directed RNA polymerase subunit alpha.